The chain runs to 208 residues: LexA repressor (208 aa).

Positions 29 to 49 form a DNA-binding region, H-T-H motif; it reads VREICGAVGLSSTSTVHGHIN. Residues Ser129 and Lys167 each act as for autocatalytic cleavage activity in the active site.

This sequence belongs to the peptidase S24 family. As to quaternary structure, homodimer.

The catalysed reaction is Hydrolysis of Ala-|-Gly bond in repressor LexA.. Represses a number of genes involved in the response to DNA damage (SOS response), including recA and lexA. In the presence of single-stranded DNA, RecA interacts with LexA causing an autocatalytic cleavage which disrupts the DNA-binding part of LexA, leading to derepression of the SOS regulon and eventually DNA repair. The polypeptide is LexA repressor (Limosilactobacillus fermentum (strain NBRC 3956 / LMG 18251) (Lactobacillus fermentum)).